The sequence spans 300 residues: Elongator complex protein 5 (300 aa).

Ser-252 carries the phosphoserine modification. The segment at 264–300 is disordered; sequence QQALLRPRPGQATSHIFYEPDAYDDLDQEDPDDDLDI. Over residues 284 to 300 the composition is skewed to acidic residues; sequence DAYDDLDQEDPDDDLDI.

Belongs to the ELP5 family. As to quaternary structure, component of the elongator complex which consists of ELP1, ELP2, ELP3, ELP4, ELP5 and ELP6; in the complex, is required for optimal binding of ELP3 to ELP4. Post-translationally, tyrosine-phosphorylated. Ubiquitously expressed with high levels in heart, brain, liver, skeletal muscle and testis.

Its subcellular location is the nucleus. It is found in the cytoplasm. It functions in the pathway tRNA modification; 5-methoxycarbonylmethyl-2-thiouridine-tRNA biosynthesis. Functionally, component of the elongator complex which is required for multiple tRNA modifications, including mcm5U (5-methoxycarbonylmethyl uridine), mcm5s2U (5-methoxycarbonylmethyl-2-thiouridine), and ncm5U (5-carbamoylmethyl uridine). The elongator complex catalyzes formation of carboxymethyluridine in the wobble base at position 34 in tRNAs. Involved in cell migration. This Homo sapiens (Human) protein is Elongator complex protein 5.